Consider the following 129-residue polypeptide: Glycine cleavage system H protein (129 aa).

Positions 24–106 (TYTVGITEHA…YTDGWIFKIK (83 aa)) constitute a Lipoyl-binding domain. K65 bears the N6-lipoyllysine mark.

The protein belongs to the GcvH family. The glycine cleavage system is composed of four proteins: P, T, L and H. The cofactor is (R)-lipoate.

Its function is as follows. The glycine cleavage system catalyzes the degradation of glycine. The H protein shuttles the methylamine group of glycine from the P protein to the T protein. This chain is Glycine cleavage system H protein, found in Klebsiella pneumoniae subsp. pneumoniae (strain ATCC 700721 / MGH 78578).